Reading from the N-terminus, the 130-residue chain is Small ribosomal subunit protein uS11 (130 aa).

Belongs to the universal ribosomal protein uS11 family. In terms of assembly, part of the 30S ribosomal subunit. Interacts with proteins S7 and S18. Binds to IF-3.

Functionally, located on the platform of the 30S subunit, it bridges several disparate RNA helices of the 16S rRNA. Forms part of the Shine-Dalgarno cleft in the 70S ribosome. In Xylella fastidiosa (strain M23), this protein is Small ribosomal subunit protein uS11.